The primary structure comprises 368 residues: Phospho-N-acetylmuramoyl-pentapeptide-transferase (368 aa).

9 consecutive transmembrane segments (helical) span residues 30-50, 72-92, 98-118, 139-159, 170-190, 208-228, 238-258, 264-286, and 345-365; these read AAAI…IRYL, LPTM…LLWS, HVWL…IDDY, VALG…SVLM, LTID…TALS, AIVV…VYAT, GGEI…FLWF, EIFM…ALLI, and KIVI…LMTL.

It belongs to the glycosyltransferase 4 family. MraY subfamily. Mg(2+) serves as cofactor.

It is found in the cell inner membrane. The catalysed reaction is UDP-N-acetyl-alpha-D-muramoyl-L-alanyl-gamma-D-glutamyl-meso-2,6-diaminopimeloyl-D-alanyl-D-alanine + di-trans,octa-cis-undecaprenyl phosphate = di-trans,octa-cis-undecaprenyl diphospho-N-acetyl-alpha-D-muramoyl-L-alanyl-D-glutamyl-meso-2,6-diaminopimeloyl-D-alanyl-D-alanine + UMP. The protein operates within cell wall biogenesis; peptidoglycan biosynthesis. Functionally, catalyzes the initial step of the lipid cycle reactions in the biosynthesis of the cell wall peptidoglycan: transfers peptidoglycan precursor phospho-MurNAc-pentapeptide from UDP-MurNAc-pentapeptide onto the lipid carrier undecaprenyl phosphate, yielding undecaprenyl-pyrophosphoryl-MurNAc-pentapeptide, known as lipid I. The polypeptide is Phospho-N-acetylmuramoyl-pentapeptide-transferase (Chlorobium luteolum (strain DSM 273 / BCRC 81028 / 2530) (Pelodictyon luteolum)).